We begin with the raw amino-acid sequence, 423 residues long: Glutamate-1-semialdehyde 2,1-aminomutase (423 aa).

Position 262 is an N6-(pyridoxal phosphate)lysine (Lys-262).

Belongs to the class-III pyridoxal-phosphate-dependent aminotransferase family. HemL subfamily. Pyridoxal 5'-phosphate serves as cofactor.

Its subcellular location is the cytoplasm. It carries out the reaction (S)-4-amino-5-oxopentanoate = 5-aminolevulinate. The protein operates within porphyrin-containing compound metabolism; protoporphyrin-IX biosynthesis; 5-aminolevulinate from L-glutamyl-tRNA(Glu): step 2/2. The polypeptide is Glutamate-1-semialdehyde 2,1-aminomutase (Methanosphaera stadtmanae (strain ATCC 43021 / DSM 3091 / JCM 11832 / MCB-3)).